The sequence spans 210 residues: Protein VNG_2543C (210 aa).

Positions glutamate 12 to glutamate 206 constitute an AMMECR1 domain.

The polypeptide is Protein VNG_2543C (Halobacterium salinarum (strain ATCC 700922 / JCM 11081 / NRC-1) (Halobacterium halobium)).